A 636-amino-acid polypeptide reads, in one-letter code: p-hydroxybenzoate-m-hydroxylase (636 aa).

Residues 11–40 (DIVI…HIDN), 242–244 (RLY), Tyr-290, and Asp-311 contribute to the FAD site. The chain crosses the membrane as a helical span at residues 12–33 (IVIVGAGPVGILLSLCMSRWGY). Asn-573 is a glycosylation site (N-linked (GlcNAc...) asparagine).

It belongs to the PheA/TfdB FAD monooxygenase family. The cofactor is FAD.

It localises to the membrane. It catalyses the reaction 4-hydroxybenzoate + NADH + O2 + H(+) = 3,4-dihydroxybenzoate + NAD(+) + H2O. The enzyme catalyses 4-hydroxybenzoate + NADPH + O2 + H(+) = 3,4-dihydroxybenzoate + NADP(+) + H2O. Its function is as follows. FAD-dependent monooxygenase; part of the benzoic acid degradation pathway also known as the protocatechuic acid pathway. Benzoic acid debradation begins with the conversion of benzoic acid into 4-hydroxybenzoic acid through hydroxylation by the benzoate-4-monooxygenase bphA, and its partner NADPH-cytochrome P450 reductase cprA which act as a mediator in electron donation from NADPH. 4-Hydroxybenzoic acid is then converted into 3,4-dihydroxybenzoic acid (also called protocatechuic acid) by the p-hydroxybenzoate-m-hydroxylase phhA. Protocatechuic acid is converted into 3-carboxy-cis,cis-muconic acid by the intradiol ring-cleavage dioxygenase prcA, which is further metabolized through the 3-oxoadipate pathway to finally enter the tricarboxylic acid cycle (TCA). This chain is p-hydroxybenzoate-m-hydroxylase, found in Emericella nidulans (strain FGSC A4 / ATCC 38163 / CBS 112.46 / NRRL 194 / M139) (Aspergillus nidulans).